The primary structure comprises 335 residues: Ferrochelatase (335 aa).

Residues His207 and Glu288 each contribute to the Fe cation site.

The protein belongs to the ferrochelatase family.

It localises to the cytoplasm. The catalysed reaction is heme b + 2 H(+) = protoporphyrin IX + Fe(2+). The protein operates within porphyrin-containing compound metabolism; protoheme biosynthesis; protoheme from protoporphyrin-IX: step 1/1. Catalyzes the ferrous insertion into protoporphyrin IX. This chain is Ferrochelatase, found in Helicobacter pylori (strain G27).